A 359-amino-acid polypeptide reads, in one-letter code: Phospho-N-acetylmuramoyl-pentapeptide-transferase (359 aa).

The next 10 helical transmembrane spans lie at 24-44 (FRAL…SPIF), 72-92 (FVPS…SILL), 100-120 (TWIM…DDFV), 134-154 (MLGQ…VMHI), 170-190 (LGYF…NAVN), 197-217 (GLAI…SYVA), 234-254 (AGEL…FLWF), 261-281 (MFMG…LAIM), 289-309 (IIAG…VSVF), and 336-356 (KIVV…IATL).

The protein belongs to the glycosyltransferase 4 family. MraY subfamily. Mg(2+) is required as a cofactor.

The protein resides in the cell inner membrane. It carries out the reaction UDP-N-acetyl-alpha-D-muramoyl-L-alanyl-gamma-D-glutamyl-meso-2,6-diaminopimeloyl-D-alanyl-D-alanine + di-trans,octa-cis-undecaprenyl phosphate = di-trans,octa-cis-undecaprenyl diphospho-N-acetyl-alpha-D-muramoyl-L-alanyl-D-glutamyl-meso-2,6-diaminopimeloyl-D-alanyl-D-alanine + UMP. It functions in the pathway cell wall biogenesis; peptidoglycan biosynthesis. Functionally, catalyzes the initial step of the lipid cycle reactions in the biosynthesis of the cell wall peptidoglycan: transfers peptidoglycan precursor phospho-MurNAc-pentapeptide from UDP-MurNAc-pentapeptide onto the lipid carrier undecaprenyl phosphate, yielding undecaprenyl-pyrophosphoryl-MurNAc-pentapeptide, known as lipid I. This is Phospho-N-acetylmuramoyl-pentapeptide-transferase from Hydrogenobaculum sp. (strain Y04AAS1).